Consider the following 953-residue polypeptide: MITSAAGIISLLDEEEPQLKEFALHKLNAVVNDFWAEISESVDKIEVLYEDEGFRSRQFAALVASKVFYHLGAFEESLNYALGAGDLFNVNDNSEYVETIIAKCIDHYTKQCVENADLPEGEKKPIDQRLEGIVNKMFQRCLDDHKYKQAIGIALETRRLDVFEKTILESNDVPGMLAYSLKLCMSLMQNKQFRNKVLRVLVKIYMNLEKPDFINVCQCLIFLDDPQAVSDILEKLVKEDNLLMAYQICFDLYESASQQFLSSVIQNLRTVGTPIASVPGSTNTGTVPGSEKDSDPMETEEKTASAVAGKTPDASPEPKDQTLKMIKILSGEMAIELHLQFLIRNNNTDLMILKNTKDAVRNSVCHTATVIANSFMHCGTTSDQFLRDNLEWLARATNWAKFTATASLGVIHKGHEKEALQLMATYLPKDTSPGSAYQEGGGLYALGLIHANHGGDIIDYLLNQLKNASNDIVRHGGSLGLGLAAMGTARQDVYDLLKTNLYQDDAVTGEAAGLALGLVMLGSKNAQAIEDMVGYAQETQHEKILRGLAVGIALVMYGRMEEADALIESLCRDKDPILRRSGMYTVAMAYCGSGNNKAIRRLLHVAVSDVNDDVRRAAVESLGFILFRTPEQCPSVVSLLSESYNPHVRYGAAMALGICCAGTGNKEAINLLEPMTNDPVNYVRQGALIASALIMIQQTEITCPKVNQFRQLYSKVINDKHDDVMAKFGAILAQGILDAGGHNVTISLQSRTGHTHMPSVVGVLVFTQFWFWFPLSHFLSLAYTPTCVIGLNKDLKMPKVQYKSNCKPSTFAYPAPLEVPKEKEKEKVSTAVLSITAKAKKKEKEKEKKEEEKMEVDEAEKKEEKEKKKEPEPNFQLLDNPARVMPAQLKVLSMTETCRYQPFKPLSIGGIIILKDTSEDVEELVEPVAAHGPKIEEEEQEPEPPEPFEYIDD.

Residue Met-1 is modified to N-acetylmethionine. Thr-273 is modified (phosphothreonine). The tract at residues 277–319 (SVPGSTNTGTVPGSEKDSDPMETEEKTASAVAGKTPDASPEPK) is disordered. At Ser-290 the chain carries Phosphoserine. Residues 290 to 303 (SEKDSDPMETEEKT) show a composition bias toward basic and acidic residues. At Lys-310 the chain carries N6-acetyllysine. Thr-311 bears the Phosphothreonine mark. Ser-315 bears the Phosphoserine mark. PC repeat units follow at residues 403 to 436 (TATA…PGSA), 441 to 474 (GGLY…DIVR), 476 to 510 (GGSL…VTGE), 511 to 545 (AAGL…EKIL), 547 to 580 (GLAV…ILRR), 581 to 616 (SGMY…DVRR), 617 to 649 (AAVE…PHVR), 651 to 685 (GAAM…YVRQ), 686 to 726 (GALI…DVMA), and 729 to 761 (GAIL…PSVV). Position 720 is an N6-acetyllysine (Lys-720). Thr-830 is subject to Phosphothreonine. Ser-834 is modified (phosphoserine). 2 disordered regions span residues 839–881 (AKKK…LDNP) and 930–953 (AHGP…YIDD). Composition is skewed to basic and acidic residues over residues 842–852 (KEKEKEKKEEE) and 859–872 (AEKK…KEPE). Residues 936 to 953 (EEEEQEPEPPEPFEYIDD) show a composition bias toward acidic residues.

This sequence belongs to the proteasome subunit S1 family. As to quaternary structure, component of the 19S proteasome regulatory particle complex. The 26S proteasome consists of a 20S core particle (CP) and two 19S regulatory subunits (RP). The regulatory particle is made of a lid composed of 9 subunits, a base containing 6 ATPases and few additional components including PSMD1. Interacts with ADRM1. Interacts with ZFAND1.

In terms of biological role, component of the 26S proteasome, a multiprotein complex involved in the ATP-dependent degradation of ubiquitinated proteins. This complex plays a key role in the maintenance of protein homeostasis by removing misfolded or damaged proteins, which could impair cellular functions, and by removing proteins whose functions are no longer required. Therefore, the proteasome participates in numerous cellular processes, including cell cycle progression, apoptosis, or DNA damage repair. The sequence is that of 26S proteasome non-ATPase regulatory subunit 1 (Psmd1) from Mus musculus (Mouse).